Consider the following 267-residue polypeptide: Dihydropteroate synthase (267 aa).

One can recognise a Pterin-binding domain in the interval 1 to 251 (MTKTKIIGIL…NVDLNVKLAQ (251 aa)). A Mg(2+)-binding site is contributed by N11. (7,8-dihydropterin-6-yl)methyl diphosphate is bound by residues T51, D84, N103, D167, K203, and 239 to 241 (RVH).

It belongs to the DHPS family. It depends on Mg(2+) as a cofactor.

It catalyses the reaction (7,8-dihydropterin-6-yl)methyl diphosphate + 4-aminobenzoate = 7,8-dihydropteroate + diphosphate. It functions in the pathway cofactor biosynthesis; tetrahydrofolate biosynthesis; 7,8-dihydrofolate from 2-amino-4-hydroxy-6-hydroxymethyl-7,8-dihydropteridine diphosphate and 4-aminobenzoate: step 1/2. Its function is as follows. Catalyzes the condensation of para-aminobenzoate (pABA) with 6-hydroxymethyl-7,8-dihydropterin diphosphate (DHPt-PP) to form 7,8-dihydropteroate (H2Pte), the immediate precursor of folate derivatives. In Staphylococcus haemolyticus, this protein is Dihydropteroate synthase (folP).